Here is a 314-residue protein sequence, read N- to C-terminus: Serine/threonine-protein phosphatase PP2A-5 catalytic subunit (314 aa).

Mn(2+)-binding residues include aspartate 62, histidine 64, aspartate 90, and asparagine 122. Histidine 123 acts as the Proton donor in catalysis. Residues histidine 172 and histidine 246 each contribute to the Mn(2+) site.

Belongs to the PPP phosphatase family. PP-2A subfamily. Requires Mn(2+) as cofactor.

It is found in the cytoplasm. The catalysed reaction is O-phospho-L-seryl-[protein] + H2O = L-seryl-[protein] + phosphate. It catalyses the reaction O-phospho-L-threonyl-[protein] + H2O = L-threonyl-[protein] + phosphate. This chain is Serine/threonine-protein phosphatase PP2A-5 catalytic subunit (NPP5), found in Nicotiana tabacum (Common tobacco).